A 434-amino-acid polypeptide reads, in one-letter code: ATP-dependent protease ATPase subunit HslU (434 aa).

ATP-binding positions include Val18, 60 to 65 (GVGKTE), Asp247, Glu312, and Arg384.

The protein belongs to the ClpX chaperone family. HslU subfamily. In terms of assembly, a double ring-shaped homohexamer of HslV is capped on each side by a ring-shaped HslU homohexamer. The assembly of the HslU/HslV complex is dependent on binding of ATP.

Its subcellular location is the cytoplasm. Functionally, ATPase subunit of a proteasome-like degradation complex; this subunit has chaperone activity. The binding of ATP and its subsequent hydrolysis by HslU are essential for unfolding of protein substrates subsequently hydrolyzed by HslV. HslU recognizes the N-terminal part of its protein substrates and unfolds these before they are guided to HslV for hydrolysis. The polypeptide is ATP-dependent protease ATPase subunit HslU (Bradyrhizobium diazoefficiens (strain JCM 10833 / BCRC 13528 / IAM 13628 / NBRC 14792 / USDA 110)).